The chain runs to 113 residues: uncharacterized protein (113 aa).

The 48-residue stretch at 41 to 88 (DWHHHPDSDELFIVLEGELLIDFKDKETAVLKANDSLLIPKGTVHRTR) folds into the Cupin type-2 domain.

It belongs to the SchB/CurC family.

This is an uncharacterized protein from Bacillus subtilis (strain 168).